The sequence spans 359 residues: 3-dehydroquinate synthase (359 aa).

NAD(+) contacts are provided by residues 71-76 (DGEAYK), 105-109 (GVIGD), 129-130 (TT), lysine 142, and lysine 151. Positions 184, 247, and 264 each coordinate Zn(2+).

It belongs to the sugar phosphate cyclases superfamily. Dehydroquinate synthase family. The cofactor is Co(2+). It depends on Zn(2+) as a cofactor. Requires NAD(+) as cofactor.

It localises to the cytoplasm. It carries out the reaction 7-phospho-2-dehydro-3-deoxy-D-arabino-heptonate = 3-dehydroquinate + phosphate. Its pathway is metabolic intermediate biosynthesis; chorismate biosynthesis; chorismate from D-erythrose 4-phosphate and phosphoenolpyruvate: step 2/7. In terms of biological role, catalyzes the conversion of 3-deoxy-D-arabino-heptulosonate 7-phosphate (DAHP) to dehydroquinate (DHQ). This Burkholderia multivorans (strain ATCC 17616 / 249) protein is 3-dehydroquinate synthase.